Reading from the N-terminus, the 651-residue chain is MSGVRAVRISIESACEKQVQEVGLDGTETYLQPLSMSQNLARLAQRIDFSQGSGSEEEEAAGAEGDAQDWAGAGSSADQDDEEGLVKFQPSLWPWDSVRNNLRSALTEMCVLYDVLSIVRDKKFMTLDPVSQDALPPKQNPQTLQLISKKKSLAGAAQILLKGAERLTKSVTENQENKLQRDFNSELLRLRQHWKLRKVGDKILGDLSYRSAGSLFPHHGTFEVIKNTDIDLDKKIPEDYCPLDVQIPSDLEGSAYIRVSIQKQAPDIGDLGTVNLFKRPLPKSKPGSPHWQTKLEAAQNVLLCKEIFAQLSREAVQIKSQIPHIVVKNQIISQPFPSLQLSISLCHSSNDKKSPKSATEKQSPEDHLYVLEHNLHLLIREFHKQTLSSIMMPHPASAPFGHKRMRLSGPQAFDKNEINSIQSSEGLLEKIIKQAKHIFLRSRTAATIDSLASRIEDPQIQAHWSNINDVYESSVKVLITSQGYEQICKSIQLQLNIGVEQIRVVHRDGRVITLSHEGQELQDFLLSQMSQHQVHAVQQLAKVMGWQVLSFSNHVGLGPVESIGNASAITVASPNGDYAISVRNGPESGSKIMVQFPRNQCKDLPKSDVLQDSKWNHLRGPFKEVQWNKMEGRNFVYKMELLMSALSPCLL.

Residues 51 to 83 (QGSGSEEEEAAGAEGDAQDWAGAGSSADQDDEE) are disordered. A compositionally biased stretch (low complexity) spans 62–74 (GAEGDAQDWAGAG).

This sequence belongs to the Mediator complex subunit 17 family. In terms of assembly, component of the Mediator complex, which is composed of MED1, MED4, MED6, MED7, MED8, MED9, MED10, MED11, MED12, MED13, MED13L, MED14, MED15, MED16, MED17, MED18, MED19, MED20, MED21, MED22, MED23, MED24, MED25, MED26, MED27, MED29, MED30, MED31, CCNC, CDK8 and CDC2L6/CDK11. The MED12, MED13, CCNC and CDK8 subunits form a distinct module termed the CDK8 module. Mediator containing the CDK8 module is less active than Mediator lacking this module in supporting transcriptional activation. Individual preparations of the Mediator complex lacking one or more distinct subunits have been variously termed ARC, CRSP, DRIP, PC2, SMCC and TRAP. Interacts with GATA1, PPARG and STAT2.

The protein localises to the nucleus. In terms of biological role, component of the Mediator complex, a coactivator involved in the regulated transcription of nearly all RNA polymerase II-dependent genes. Mediator functions as a bridge to convey information from gene-specific regulatory proteins to the basal RNA polymerase II transcription machinery. Mediator is recruited to promoters by direct interactions with regulatory proteins and serves as a scaffold for the assembly of a functional preinitiation complex with RNA polymerase II and the general transcription factors. This is Mediator of RNA polymerase II transcription subunit 17 (MED17) from Bos taurus (Bovine).